The chain runs to 510 residues: Probable inorganic carbon transporter subunit DabB (510 aa).

A run of 14 helical transmembrane segments spans residues 9–29 (TLLT…LLFL), 37–57 (FVHI…LALV), 68–88 (WHLD…GLII), 105–122 (YFAL…AWLS), 125–145 (LRFM…LIGL), 158–178 (ISGY…IWLF), 204–224 (TGIN…WPFQ), 226–246 (WLIE…AGLV), 266–286 (QIIL…ISLV), 303–323 (GFML…HLIL), 355–375 (LWMI…WFIT), 382–402 (LVSA…LVVF), 410–430 (IAGL…HNSL), and 446–466 (APAV…CTFV).

Belongs to the inorganic carbon transporter (TC 9.A.2) DabB family. As to quaternary structure, forms a complex with DabA.

It is found in the cell membrane. Part of an energy-coupled inorganic carbon pump. Expression of both dabA and dabB (DA2) restores growth in ambient air to E.coli deleted of its carbonic anhydrase genes (called CAfree, deletion of 'can' and 'cynT'). This is Probable inorganic carbon transporter subunit DabB from Bacillus anthracis.